The primary structure comprises 160 residues: Phosphopantetheine adenylyltransferase (160 aa).

Residue serine 8 coordinates substrate. ATP-binding positions include 8 to 9 and histidine 16; that span reads SF. 3 residues coordinate substrate: lysine 40, leucine 74, and lysine 88. Residues 89–91, glutamate 99, and 124–130 each bind ATP; these read GLR and YSFVSST.

The protein belongs to the bacterial CoaD family. As to quaternary structure, homohexamer. It depends on Mg(2+) as a cofactor.

It localises to the cytoplasm. The catalysed reaction is (R)-4'-phosphopantetheine + ATP + H(+) = 3'-dephospho-CoA + diphosphate. Its pathway is cofactor biosynthesis; coenzyme A biosynthesis; CoA from (R)-pantothenate: step 4/5. Reversibly transfers an adenylyl group from ATP to 4'-phosphopantetheine, yielding dephospho-CoA (dPCoA) and pyrophosphate. The polypeptide is Phosphopantetheine adenylyltransferase (Thermus thermophilus (strain ATCC BAA-163 / DSM 7039 / HB27)).